Here is a 448-residue protein sequence, read N- to C-terminus: tRNA(Ile)-lysidine synthase (448 aa).

30-35 (GGGADS) lines the ATP pocket.

Belongs to the tRNA(Ile)-lysidine synthase family.

The protein localises to the cytoplasm. It catalyses the reaction cytidine(34) in tRNA(Ile2) + L-lysine + ATP = lysidine(34) in tRNA(Ile2) + AMP + diphosphate + H(+). In terms of biological role, ligates lysine onto the cytidine present at position 34 of the AUA codon-specific tRNA(Ile) that contains the anticodon CAU, in an ATP-dependent manner. Cytidine is converted to lysidine, thus changing the amino acid specificity of the tRNA from methionine to isoleucine. The chain is tRNA(Ile)-lysidine synthase from Idiomarina loihiensis (strain ATCC BAA-735 / DSM 15497 / L2-TR).